The primary structure comprises 209 residues: Molybdenum cofactor guanylyltransferase (209 aa).

Residues 13–15, Lys26, Asn54, Asp74, and Asp104 each bind GTP; that span reads LAG. Asp104 is a binding site for Mg(2+).

This sequence belongs to the MobA family. Monomer. Requires Mg(2+) as cofactor.

The protein localises to the cytoplasm. The catalysed reaction is Mo-molybdopterin + GTP + H(+) = Mo-molybdopterin guanine dinucleotide + diphosphate. Its function is as follows. Transfers a GMP moiety from GTP to Mo-molybdopterin (Mo-MPT) cofactor (Moco or molybdenum cofactor) to form Mo-molybdopterin guanine dinucleotide (Mo-MGD) cofactor. This Acinetobacter baumannii (strain ATCC 17978 / DSM 105126 / CIP 53.77 / LMG 1025 / NCDC KC755 / 5377) protein is Molybdenum cofactor guanylyltransferase.